A 2804-amino-acid chain; its full sequence is Nipped-B-like protein (2804 aa).

Polar residues-rich tracts occupy residues 128 to 173 and 191 to 208; these read LSQN…QNSP and HPSS…SVSS. Residues 128–340 form a disordered region; sequence LSQNSMHSSP…LGKDEKEQSE (213 aa). 2 positions are modified to phosphoserine: Ser150 and Ser162. The span at 234–249 shows a compositional bias: basic and acidic residues; the sequence is HHADNPRHGSSEDYLH. Phosphoserine occurs at positions 243, 256, 274, 280, 284, 301, 306, and 318. The span at 331 to 340 shows a compositional bias: basic and acidic residues; it reads LGKDEKEQSE. At Ser350 the chain carries Phosphoserine. The segment covering 482-500 has biased composition (basic and acidic residues); the sequence is RESAIERERFSKEVQDKDK. Residues 482–946 are disordered; it reads RESAIERERF…NKAEFPSYLL (465 aa). Positions 523 to 534 are enriched in polar residues; it reads PASQETGSTGNG. Basic and acidic residues-rich tracts occupy residues 562 to 572, 593 to 663, 672 to 685, and 694 to 939; these read DSIKKPEEIKQ, PENH…ECKQ, KQNE…KPND, and ETTK…DNKA. Thr713 and Thr746 each carry phosphothreonine. Phosphoserine is present on Ser912. Residues 996–1009 carry the PxVxL motif motif; that stretch reads NKGAKPVVVLQKLS. 2 disordered regions span residues 1017-1047 and 1060-1191; these read IKDR…DQSV and ESTM…LTPE. Lys1082 is subject to N6-acetyllysine. Ser1089, Ser1090, and Ser1096 each carry phosphoserine. Residues 1089–1100 show a composition bias toward acidic residues; it reads SSDEDNDSDEAF. Residues 1109 to 1139 show a composition bias toward basic and acidic residues; that stretch reads KDDDKAWEYEERDRRSSGDHRRSGHSHEGRR. Phosphoserine occurs at positions 1150, 1152, and 1154. Phosphotyrosine is present on Tyr1159. A Phosphoserine modification is found at Ser1160. Basic residues predominate over residues 1171–1182; it reads KMKKKEKQKKRK. Thr1189 is modified (phosphothreonine). Phosphoserine is present on Ser1197. A disordered region spans residues 1691–1710; that stretch reads AMKSQKDEESSEGTHHAKEI. HEAT repeat units lie at residues 1767–1805, 1843–1881, 1945–1984, 2227–2267, and 2313–2351; these read AQSF…VDPS, PQLA…EQPT, YDWF…HILK, VNLK…LKEM, and LIHP…KYAG. The span at 2473–2489 shows a compositional bias: basic and acidic residues; sequence VKDKRKERKSSPSKENE. 2 disordered regions span residues 2473 to 2520 and 2651 to 2696; these read VKDK…DDIN and TSLL…DSTE. Phosphoserine is present on residues Ser2493, Ser2509, Ser2511, Ser2513, Ser2515, Ser2652, and Ser2658. Over residues 2510-2519 the composition is skewed to acidic residues; the sequence is DSDSDSEDDI. The residue at position 2667 (Thr2667) is a Phosphothreonine. Ser2672 bears the Phosphoserine mark.

This sequence belongs to the SCC2/Nipped-B family. In terms of assembly, heterodimerizes with MAU2/SCC4 to form the cohesin loading complex. The NIPBL-MAU2 heterodimer interacts with the cohesin complex composed of SMC1A/B and SMC3 heterodimer, RAD21 and STAG1/SA1. NIPBL directly contacts all members of the complex, RAD21, SMC1A/B, SMC3 and STAG1. Interacts directly (via PxVxL motif) with CBX5. Interacts with ZNF609 (via N-terminus). Interacts with the multiprotein complex Integrator. Interacts (via PxVxL motif) with CBX3. Interacts with BRD4. In terms of tissue distribution, widely expressed. Highly expressed in heart, skeletal muscle, fetal and adult liver, fetal and adult kidney. Expressed at intermediates level in thymus, placenta, peripheral leukocyte and small intestine. Weakly or not expressed in brain, colon, spleen and lung.

It is found in the nucleus. It localises to the chromosome. Its function is as follows. Plays an important role in the loading of the cohesin complex on to DNA. Forms a heterodimeric complex (also known as cohesin loading complex) with MAU2/SCC4 which mediates the loading of the cohesin complex onto chromatin. Plays a role in cohesin loading at sites of DNA damage. Its recruitment to double-strand breaks (DSBs) sites occurs in a CBX3-, RNF8- and RNF168-dependent manner whereas its recruitment to UV irradiation-induced DNA damage sites occurs in a ATM-, ATR-, RNF8- and RNF168-dependent manner. Along with ZNF609, promotes cortical neuron migration during brain development by regulating the transcription of crucial genes in this process. Preferentially binds promoters containing paused RNA polymerase II. Up-regulates the expression of SEMA3A, NRP1, PLXND1 and GABBR2 genes, among others. In Homo sapiens (Human), this protein is Nipped-B-like protein (NIPBL).